The chain runs to 152 residues: Transcriptional repressor NrdR (152 aa).

A zinc finger spans residues 3–34 (CCYCGHGESKVLETRSAEEGRVIRRRRECMEC). The ATP-cone domain occupies 49–139 (LIVRKKGGSL…VYRQFTDVGR (91 aa)).

This sequence belongs to the NrdR family. Zn(2+) serves as cofactor.

Its function is as follows. Negatively regulates transcription of bacterial ribonucleotide reductase nrd genes and operons by binding to NrdR-boxes. The chain is Transcriptional repressor NrdR from Heliobacterium modesticaldum (strain ATCC 51547 / Ice1).